A 390-amino-acid chain; its full sequence is MNHELPVISLFSGAGGLDCAIESCAEPPLVQDGSGSPLRVAVATDYEQTALDTLSANFPHTKTLCGDIQTIPTAELLEAGGLKPGDPTLVIGGPPCTPFSKSGFWIEEKRNSADPNASLLDEYVRVVRESKPEAFILENVQGLTYKTHQAQFDRLIAGLKDAGYNPTFRVLLAAEYGVPQLRRRVFVVGRRDGKAFHFPETTHSGESERDRVIDHTKIPFTSLREALAGLPDVPEAGEVVEGTYAELAAEVPPGQNYLWHTDRYGGRNEFKWRSRYWTFLLKADPDRPSTTLQAQPGPWVGPFHWENVKNANGEERARRFRVAEMKRIMTFPDEFVFTGVKREVQRQIGNPVPVELGKVVVRALMEQLGYLDSRGTTIPSQAGHEQLELI.

In terms of domain architecture, SAM-dependent MTase C5-type spans 5 to 371 (LPVISLFSGA…RALMEQLGYL (367 aa)). Cys96 is a catalytic residue.

The protein belongs to the class I-like SAM-binding methyltransferase superfamily. C5-methyltransferase family.

It carries out the reaction a 2'-deoxycytidine in DNA + S-adenosyl-L-methionine = a 5-methyl-2'-deoxycytidine in DNA + S-adenosyl-L-homocysteine + H(+). Its function is as follows. A beta methylase recognizes the double-stranded sequence 5'-GAGCTC-3', methylates C-4 on both strands, and protects the DNA from cleavage by the SacI endonuclease. The chain is Type II methyltransferase M.SacI from Streptomyces achromogenes.